Reading from the N-terminus, the 520-residue chain is GMP synthase [glutamine-hydrolyzing] (520 aa).

The Glutamine amidotransferase type-1 domain maps to 9 to 202; the sequence is TILIIDFGSQ…VHRIVGVKPG (194 aa). Residue Cys-86 is the Nucleophile of the active site. Catalysis depends on residues His-176 and Glu-178. Residues 203 to 395 enclose the GMPS ATP-PPase domain; it reads WTMGAYREQA…LGLPDSFIGR (193 aa). Residue 230-236 coordinates ATP; it reads SGGVDSS.

In terms of assembly, homodimer.

It carries out the reaction XMP + L-glutamine + ATP + H2O = GMP + L-glutamate + AMP + diphosphate + 2 H(+). It functions in the pathway purine metabolism; GMP biosynthesis; GMP from XMP (L-Gln route): step 1/1. Catalyzes the synthesis of GMP from XMP. This chain is GMP synthase [glutamine-hydrolyzing], found in Brucella abortus (strain S19).